The following is a 91-amino-acid chain: YcgL domain-containing protein Sde_1339 (91 aa).

Residues 1 to 85 (MIVDIYRSAK…PPESYMNEIP (85 aa)) enclose the YcgL domain. Positions 72–91 (QMPPPPESYMNEIPNDKMPR) are disordered.

This is YcgL domain-containing protein Sde_1339 from Saccharophagus degradans (strain 2-40 / ATCC 43961 / DSM 17024).